The sequence spans 416 residues: Glutamyl-tRNA reductase (416 aa).

Substrate is bound by residues 49 to 52 (TCNR), S105, 110 to 112 (ETQ), and Q116. The Nucleophile role is filled by C50. NADP(+) is bound at residue 185 to 190 (GAGEMI).

The protein belongs to the glutamyl-tRNA reductase family. As to quaternary structure, homodimer.

It carries out the reaction (S)-4-amino-5-oxopentanoate + tRNA(Glu) + NADP(+) = L-glutamyl-tRNA(Glu) + NADPH + H(+). It functions in the pathway porphyrin-containing compound metabolism; protoporphyrin-IX biosynthesis; 5-aminolevulinate from L-glutamyl-tRNA(Glu): step 1/2. Its function is as follows. Catalyzes the NADPH-dependent reduction of glutamyl-tRNA(Glu) to glutamate 1-semialdehyde (GSA). This Thiobacillus denitrificans (strain ATCC 25259 / T1) protein is Glutamyl-tRNA reductase.